We begin with the raw amino-acid sequence, 62 residues long: MAKRCALTFKGPMVGNHVSHANNKNKRRLLPNLRSIKIQLDDGTTKRIKVAASTLRTMRKGA.

Belongs to the bacterial ribosomal protein bL28 family.

The polypeptide is Large ribosomal subunit protein bL28 (Helicobacter pylori (strain Shi470)).